Here is a 370-residue protein sequence, read N- to C-terminus: Anhydro-N-acetylmuramic acid kinase (370 aa).

13–20 (GTSMDGVD) provides a ligand contact to ATP.

It belongs to the anhydro-N-acetylmuramic acid kinase family.

The enzyme catalyses 1,6-anhydro-N-acetyl-beta-muramate + ATP + H2O = N-acetyl-D-muramate 6-phosphate + ADP + H(+). Its pathway is amino-sugar metabolism; 1,6-anhydro-N-acetylmuramate degradation. The protein operates within cell wall biogenesis; peptidoglycan recycling. Functionally, catalyzes the specific phosphorylation of 1,6-anhydro-N-acetylmuramic acid (anhMurNAc) with the simultaneous cleavage of the 1,6-anhydro ring, generating MurNAc-6-P. Is required for the utilization of anhMurNAc either imported from the medium or derived from its own cell wall murein, and thus plays a role in cell wall recycling. The protein is Anhydro-N-acetylmuramic acid kinase of Vibrio vulnificus (strain YJ016).